A 590-amino-acid polypeptide reads, in one-letter code: Aspartate--tRNA(Asp/Asn) ligase (590 aa).

Glu-175 provides a ligand contact to L-aspartate. The interval 199–202 (QQYK) is aspartate. L-aspartate contacts are provided by Arg-221 and His-450. 221 to 223 (RDE) contacts ATP. Glu-484 provides a ligand contact to ATP. An L-aspartate-binding site is contributed by Arg-491. 536 to 539 (GVDR) serves as a coordination point for ATP.

The protein belongs to the class-II aminoacyl-tRNA synthetase family. Type 1 subfamily. Homodimer.

The protein localises to the cytoplasm. It carries out the reaction tRNA(Asx) + L-aspartate + ATP = L-aspartyl-tRNA(Asx) + AMP + diphosphate. Aspartyl-tRNA synthetase with relaxed tRNA specificity since it is able to aspartylate not only its cognate tRNA(Asp) but also tRNA(Asn). Reaction proceeds in two steps: L-aspartate is first activated by ATP to form Asp-AMP and then transferred to the acceptor end of tRNA(Asp/Asn). In Rhodopseudomonas palustris (strain BisA53), this protein is Aspartate--tRNA(Asp/Asn) ligase.